The primary structure comprises 801 residues: PR domain zinc finger protein 4 (801 aa).

The SET domain occupies 412-529 (KQLVLRQSIV…PENELLFYYS (118 aa)). The segment at 545-566 (HLCNCGKECNSYTEFKAHLTSH) adopts a C2H2-type 1; atypical zinc-finger fold. 4 consecutive C2H2-type zinc fingers follow at residues 618 to 640 (HKCD…LKIH), 646 to 668 (YRCT…MVIH), 674 to 696 (LKCD…VLIH), and 702 to 724 (IKCP…LNSH). Residues 730–752 (YVCEKCTKAYLTKYHLTRHLKTC) form a C2H2-type 6; atypical zinc finger. Residues 751 to 782 (TCKGPTSSSSAPEEEEEDDSEEEDLADSVGTE) are disordered. The segment covering 762–776 (PEEEEEDDSEEEDLA) has biased composition (acidic residues).

The protein belongs to the class V-like SAM-binding methyltransferase superfamily.

Its subcellular location is the nucleus. Its function is as follows. May function as a transcription factor involved in cell differentiation. This Pongo abelii (Sumatran orangutan) protein is PR domain zinc finger protein 4 (PRDM4).